Reading from the N-terminus, the 443-residue chain is UDP-N-acetylglucosamine 1-carboxyvinyltransferase 1 (443 aa).

22–23 serves as a coordination point for phosphoenolpyruvate; it reads KN. Position 95 (R95) interacts with UDP-N-acetyl-alpha-D-glucosamine. C119 (proton donor) is an active-site residue. A 2-(S-cysteinyl)pyruvic acid O-phosphothioketal modification is found at C119. Residues 124–128, D308, and V330 each bind UDP-N-acetyl-alpha-D-glucosamine; that span reads RPIDL.

This sequence belongs to the EPSP synthase family. MurA subfamily.

The protein resides in the cytoplasm. It carries out the reaction phosphoenolpyruvate + UDP-N-acetyl-alpha-D-glucosamine = UDP-N-acetyl-3-O-(1-carboxyvinyl)-alpha-D-glucosamine + phosphate. Its pathway is cell wall biogenesis; peptidoglycan biosynthesis. Functionally, cell wall formation. Adds enolpyruvyl to UDP-N-acetylglucosamine. This chain is UDP-N-acetylglucosamine 1-carboxyvinyltransferase 1, found in Oceanobacillus iheyensis (strain DSM 14371 / CIP 107618 / JCM 11309 / KCTC 3954 / HTE831).